The sequence spans 342 residues: Oxygen-dependent coproporphyrinogen-III oxidase (342 aa).

Ser-98 is a substrate binding site. Residues His-102 and His-112 each coordinate a divalent metal cation. His-112 acts as the Proton donor in catalysis. 114 to 116 (NYR) contacts substrate. A divalent metal cation contacts are provided by His-146 and His-176. The important for dimerization stretch occupies residues 266-301 (YVEFNLVWDRGTIFGLQTNGRTESILMSLPPLARWE).

This sequence belongs to the aerobic coproporphyrinogen-III oxidase family. As to quaternary structure, homodimer. A divalent metal cation is required as a cofactor.

The protein resides in the cytoplasm. It carries out the reaction coproporphyrinogen III + O2 + 2 H(+) = protoporphyrinogen IX + 2 CO2 + 2 H2O. It participates in porphyrin-containing compound metabolism; protoporphyrin-IX biosynthesis; protoporphyrinogen-IX from coproporphyrinogen-III (O2 route): step 1/1. Functionally, involved in the heme and chlorophyll biosynthesis. Catalyzes the aerobic oxidative decarboxylation of propionate groups of rings A and B of coproporphyrinogen-III to yield the vinyl groups in protoporphyrinogen-IX. This chain is Oxygen-dependent coproporphyrinogen-III oxidase, found in Prochlorococcus marinus subsp. pastoris (strain CCMP1986 / NIES-2087 / MED4).